The chain runs to 461 residues: Coronin-1A (461 aa).

Ser2 is subject to N-acetylserine. Ser2 carries the post-translational modification Phosphoserine; by PKC. WD repeat units lie at residues His13 to Pro63, Asn73 to Glu110, Pro123 to Asp160, Gly164 to Glu204, Lys207 to Asp251, Pro258 to Glu296, and Pro302 to Ala349. The segment covering Glu403–Thr418 has biased composition (basic and acidic residues). Residues Glu403 to Glu434 form a disordered region. Ser412 bears the Phosphoserine; by PKC mark. At Thr418 the chain carries Phosphothreonine. The span at Pro421 to Val430 shows a compositional bias: polar residues. Residue Ser422 is modified to Phosphoserine. The stretch at Thr424–Lys461 forms a coiled coil.

Belongs to the WD repeat coronin family. Binds actin. In terms of processing, phosphorylation at Ser-412 by PKC strongly down-regulates the association with actin. Post-translationally, polyubiquitinated by RNF128 with 'Lys-48'-linked chains, leading to proteasomal degradation. As to expression, expressed in spleen, lymph nodes, thymus, brain and at very lower levels in lung. Also expressed in cells of the lymphoid/myeloid lineage. Not expressed in Kuffper cells.

The protein resides in the cytoplasm. It localises to the cytoskeleton. It is found in the cell cortex. The protein localises to the cytoplasmic vesicle. Its subcellular location is the phagosome membrane. Functionally, may be a crucial component of the cytoskeleton of highly motile cells, functioning both in the invagination of large pieces of plasma membrane, as well as in forming protrusions of the plasma membrane involved in cell locomotion. In mycobacteria-infected cells, its retention on the phagosomal membrane prevents fusion between phagosomes and lysosomes. The polypeptide is Coronin-1A (Coro1a) (Mus musculus (Mouse)).